Consider the following 299-residue polypeptide: UPF0276 protein ABO_1518 (299 aa).

Belongs to the UPF0276 family.

This Alcanivorax borkumensis (strain ATCC 700651 / DSM 11573 / NCIMB 13689 / SK2) protein is UPF0276 protein ABO_1518.